The chain runs to 293 residues: Ribonuclease HII (293 aa).

The RNase H type-2 domain occupies 81–271 (THIAGVDEAG…VREALGLPTG (191 aa)). A divalent metal cation is bound by residues aspartate 87, glutamate 88, and aspartate 180. The interval 273–293 (PPSALQAELFPEAPSRTGVKS) is disordered.

It belongs to the RNase HII family. Mn(2+) serves as cofactor. Requires Mg(2+) as cofactor.

It is found in the cytoplasm. The catalysed reaction is Endonucleolytic cleavage to 5'-phosphomonoester.. Endonuclease that specifically degrades the RNA of RNA-DNA hybrids. This Myxococcus xanthus (strain DK1622) protein is Ribonuclease HII.